We begin with the raw amino-acid sequence, 258 residues long: Hydroxyacylglutathione hydrolase (258 aa).

Positions 55, 57, 59, 60, 115, 132, and 170 each coordinate Zn(2+).

It belongs to the metallo-beta-lactamase superfamily. Glyoxalase II family. In terms of assembly, monomer. Zn(2+) serves as cofactor.

It carries out the reaction an S-(2-hydroxyacyl)glutathione + H2O = a 2-hydroxy carboxylate + glutathione + H(+). It functions in the pathway secondary metabolite metabolism; methylglyoxal degradation; (R)-lactate from methylglyoxal: step 2/2. Functionally, thiolesterase that catalyzes the hydrolysis of S-D-lactoyl-glutathione to form glutathione and D-lactic acid. The protein is Hydroxyacylglutathione hydrolase of Shewanella denitrificans (strain OS217 / ATCC BAA-1090 / DSM 15013).